The chain runs to 344 residues: Methionine import ATP-binding protein MetN (344 aa).

The ABC transporter domain maps to 2 to 241 (IEINRVNKVF…PKTELARKFI (240 aa)). ATP is bound at residue 38-45 (GSSGAGKS).

This sequence belongs to the ABC transporter superfamily. Methionine importer (TC 3.A.1.24) family. In terms of assembly, the complex is composed of two ATP-binding proteins (MetN), two transmembrane proteins (MetI) and a solute-binding protein (MetQ).

The protein resides in the cell inner membrane. It carries out the reaction L-methionine(out) + ATP + H2O = L-methionine(in) + ADP + phosphate + H(+). The enzyme catalyses D-methionine(out) + ATP + H2O = D-methionine(in) + ADP + phosphate + H(+). In terms of biological role, part of the ABC transporter complex MetNIQ involved in methionine import. Responsible for energy coupling to the transport system. The protein is Methionine import ATP-binding protein MetN of Photobacterium profundum (strain SS9).